A 482-amino-acid chain; its full sequence is MAEAATPGTTATTSGAGAAAATAAAASPTPIPTVTAPSLGAGGGGGGSDGSGGGWTKQVTCRYFMHGVCKEGDNCRYSHDLSDSPYSVVCKYFQRGYCIYGDRCRYEHSKPLKQEEATATELTTKSSLAASSSLSSIVGPLVEMNTGEAESRNSNFATVGAGSEDWVNAIEFVPGQPYCGRTAPSCTEAPLQGSVTKEESEKEQTAVETKKQLCPYAAVGECRYGENCVYLHGDSCDMCGLQVLHPMDAAQRSQHIKSCIEAHEKDMELSFAVQRSKDMVCGICMEVVYEKANPSERRFGILSNCNHTYCLKCIRKWRSAKQFESKIIKSCPECRITSNFVIPSEYWVEEKEEKQKLILKYKEAMSNKACRYFDEGRGSCPFGGNCFYKHAYPDGRREEPQRQKVGTSSRYRAQRRNHFWELIEERENSNPFDNDEEEVVTFELGEMLLMLLAAGGDDELTDSEDEWDLFHDELEDFYDLDL.

Over residues 26–38 (ASPTPIPTVTAPS) the composition is skewed to low complexity. The segment at 26-52 (ASPTPIPTVTAPSLGAGGGGGGSDGSG) is disordered. Over residues 40-52 (GAGGGGGGSDGSG) the composition is skewed to gly residues. 3 consecutive C3H1-type zinc fingers follow at residues 55 to 82 (WTKQVTCRYFMHGVCKEGDNCRYSHDLS), 84 to 111 (SPYSVVCKYFQRGYCIYGDRCRYEHSKP), and 208 to 235 (ETKKQLCPYAAVGECRYGENCVYLHGDS). A makorin-type Cys-His region spans residues 236-263 (CDMCGLQVLHPMDAAQRSQHIKSCIEAH). An RING-type zinc finger spans residues 281-335 (CGICMEVVYEKANPSERRFGILSNCNHTYCLKCIRKWRSAKQFESKIIKSCPECR). The C3H1-type 4 zinc-finger motif lies at 364 to 393 (AMSNKACRYFDEGRGSCPFGGNCFYKHAYP).

In terms of assembly, interacts with p53/TP53 and CDKN1A. Interacts with TERT, modulating telomere length homeostasis. In terms of processing, auto-ubiquitinated; which leads to proteasomal degradation. As to expression, ubiquitous.

It catalyses the reaction S-ubiquitinyl-[E2 ubiquitin-conjugating enzyme]-L-cysteine + [acceptor protein]-L-lysine = [E2 ubiquitin-conjugating enzyme]-L-cysteine + N(6)-ubiquitinyl-[acceptor protein]-L-lysine.. It participates in protein modification; protein ubiquitination. E3 ubiquitin ligase catalyzing the covalent attachment of ubiquitin moieties onto substrate proteins. These substrates include FILIP1, p53/TP53, CDKN1A and TERT. Keeps cells alive by suppressing p53/TP53 under normal conditions, but stimulates apoptosis by repressing CDKN1A under stress conditions. Acts as a negative regulator of telomerase. Has negative and positive effects on RNA polymerase II-dependent transcription. The protein is E3 ubiquitin-protein ligase makorin-1 (MKRN1) of Homo sapiens (Human).